An 882-amino-acid chain; its full sequence is Pyruvate dehydrogenase E1 component (882 aa).

As to quaternary structure, homodimer. Part of the PDH complex, consisting of multiple copies of pyruvate dehydrogenase (E1), dihydrolipoamide acetyltransferase (E2) and lipoamide dehydrogenase (E3). The cofactor is thiamine diphosphate.

It carries out the reaction N(6)-[(R)-lipoyl]-L-lysyl-[protein] + pyruvate + H(+) = N(6)-[(R)-S(8)-acetyldihydrolipoyl]-L-lysyl-[protein] + CO2. In terms of biological role, component of the pyruvate dehydrogenase (PDH) complex, that catalyzes the overall conversion of pyruvate to acetyl-CoA and CO(2). The chain is Pyruvate dehydrogenase E1 component (aceE) from Pseudomonas aeruginosa (strain ATCC 15692 / DSM 22644 / CIP 104116 / JCM 14847 / LMG 12228 / 1C / PRS 101 / PAO1).